A 509-amino-acid chain; its full sequence is Monofunctional riboflavin biosynthesis protein RIBA 3, chloroplastic (509 aa).

The N-terminal 43 residues, 1 to 43 (MMDSALYHPRIFFAHSFINGLYSSPRFANTCWRLVSRSSWEIK), are a transit peptide targeting the chloroplast. The segment at 44 to 302 (ASENSDRNVF…LTDLIRYRRK (259 aa)) is inactive DHBP synthase. Residues 125–126 (GD) and 240–244 (RAGHT) contribute to the D-ribulose 5-phosphate site. The tract at residues 303–509 (RDKLVERITV…ISDNNDQPLA (207 aa)) is GTP cyclohydrolase II. A GTP-binding site is contributed by 353-357 (RVHSE). Zn(2+)-binding residues include Cys358, Cys369, and Cys371. GTP contacts are provided by residues Gln374, 397–399 (EGR), and Thr419. The active-site Proton acceptor; for GTP cyclohydrolase activity is the Asp431. Residue Arg433 is the Nucleophile; for GTP cyclohydrolase activity of the active site. GTP contacts are provided by Thr454 and Lys459.

This sequence in the N-terminal section; belongs to the DHBP synthase family. In the C-terminal section; belongs to the GTP cyclohydrolase II family. It depends on Zn(2+) as a cofactor. Expressed in leaves, shoots, roots, flowers and siliques.

Its subcellular location is the plastid. It is found in the chloroplast. The catalysed reaction is GTP + 4 H2O = 2,5-diamino-6-hydroxy-4-(5-phosphoribosylamino)-pyrimidine + formate + 2 phosphate + 3 H(+). The protein operates within cofactor biosynthesis; riboflavin biosynthesis; 5-amino-6-(D-ribitylamino)uracil from GTP: step 1/4. Functionally, involved in riboflavin biosynthesis. Catalyzes the conversion of GTP to 2,5-diamino-6-ribosylamino-4(3H)-pyrimidinone 5'-phosphate (DARP), formate and pyrophosphate. RIBA2 and RIBA3 together are not able to complement the loss of function of RIBA1. In Arabidopsis thaliana (Mouse-ear cress), this protein is Monofunctional riboflavin biosynthesis protein RIBA 3, chloroplastic (RIBA3).